Consider the following 362-residue polypeptide: N-acylethanolamine-hydrolyzing acid amidase (362 aa).

Residues 1–33 (MGTPAIRAACHGAHLALALLLLLSLSDPWLWAT) form the signal peptide. N-linked (GlcNAc...) asparagine glycosylation is found at asparagine 42 and asparagine 112. Cysteine 131 functions as the Nucleophile in the catalytic mechanism. 2 N-linked (GlcNAc...) asparagine glycosylation sites follow: asparagine 314 and asparagine 338.

It belongs to the acid ceramidase family. In terms of assembly, heterodimer of an alpha and a beta subunit, produced by autocatalytic cleavage. In terms of processing, N-glycosylated. Tunicamycin treatment causes a reduction in specific activity against N-palmitoylethanolamine. Post-translationally, autoproteolytic cleavage at pH 4.5 gives rise to the alpha and beta subunit. Cleavage gives rise to a conformation change that activates the enzyme. The same catalytic Cys residue mediates the autoproteolytic cleavage and subsequent hydrolysis of lipid substrates. As to expression, expressed in brain, cecum, colon, heart, ileum, kidney, liver, lung, spleen, stomach, submaxillary gland, testis and thymus.

The protein localises to the lysosome. It is found in the membrane. The catalysed reaction is N-hexadecanoylethanolamine + H2O = ethanolamine + hexadecanoate. It carries out the reaction an N-(long-chain fatty acyl)ethanolamine + H2O = a long-chain fatty acid + ethanolamine. The enzyme catalyses N-dodecanoylethanolamine + H2O = dodecanoate + ethanolamine. It catalyses the reaction N-tetradecanoylethanolamine + H2O = tetradecanoate + ethanolamine. The catalysed reaction is an N-acylsphing-4-enine + H2O = sphing-4-enine + a fatty acid. It carries out the reaction N-hexadecanoylsphing-4-enine + H2O = sphing-4-enine + hexadecanoate. The enzyme catalyses N-dodecanoylsphing-4-enine + H2O = dodecanoate + sphing-4-enine. It functions in the pathway lipid metabolism; fatty acid metabolism. Stimulated by DTT. Stimulated by nonionic detergent of the polyoxyethylenep-t-octylphenylether type (Triton X-100 or Nonidet P-40) whereas 3-[(3-cholamidopropyl)dimethylammonio]propane-1-sulfonate (CHAPS) and octyl alpha-D-glucopyranoside decrease the N-(long-chain-acyl)ethanolamine deacylase activity. Polysorbate 20 (Tween 20) is inhibitory. Stimulated by endogenous phospholipids such as choline- or ethanolamine-containing phospholipids, and dihydrolipoic acid. Functionally, degrades bioactive fatty acid amides to their corresponding acids, with the following preference: N-palmitoylethanolamine &gt; N-myristoylethanolamine &gt; N-stearoylethanolamine &gt; N-oleoylethanolamine &gt; N-linoleoylethanolamine &gt; N-arachidonoylethanolamine. The polypeptide is N-acylethanolamine-hydrolyzing acid amidase (Rattus norvegicus (Rat)).